The chain runs to 396 residues: L-lactate dehydrogenase (396 aa).

The FMN hydroxy acid dehydrogenase domain occupies 1–380 (MIISAASDYR…TQDSLVQGLG (380 aa)). Residue Tyr-24 coordinates substrate. FMN is bound by residues Ser-106 and Gln-127. Tyr-129 is a binding site for substrate. Thr-155 provides a ligand contact to FMN. Arg-164 contributes to the substrate binding site. An FMN-binding site is contributed by Lys-251. His-275 acts as the Proton acceptor in catalysis. Arg-278 contacts substrate. 306–330 (DSGIRNGLDVVRMIALGADTVLLGR) serves as a coordination point for FMN.

The protein belongs to the FMN-dependent alpha-hydroxy acid dehydrogenase family. FMN serves as cofactor.

The protein resides in the cell inner membrane. The catalysed reaction is (S)-lactate + A = pyruvate + AH2. Its function is as follows. Catalyzes the conversion of L-lactate to pyruvate. Is coupled to the respiratory chain. This chain is L-lactate dehydrogenase, found in Shigella boydii serotype 18 (strain CDC 3083-94 / BS512).